The sequence spans 347 residues: MLFSYLLATLPLLANAALTYKGADISSVFIEEKAGVAYKNLAGETQALEAILTDNGVNSIRQRVWVKNGDYDLTYNVNLAKRVAATGASIYLDLHYSDDWADPKHQTTPDGWSTDDINTLADQIYQYTLSVCNTFAEEKINVEIVSIGNEITSGLLWPLGKTPNYENIARLLHSGAWGVKDSKLATKPKILIHLDNGWDWDQQKYFYDTALGTGLLTSDDFDMIGVSYYPFYNEKATLASLKTSLTNIQTTYGKEVAVVETNWPVKCSSPEFAFPADLKDIPFSVDGQVTFLQRLADTLTATKASGFFYWEPAWTKNAGLGSSCEDNLLVDYNTNQVRSSVKAFGQV.

Positions methionine 1–alanine 16 are cleaved as a signal peptide. Residue glutamate 150 is the Proton donor of the active site. Residue glutamate 260 is the Nucleophile of the active site.

The protein belongs to the glycosyl hydrolase 53 family.

The protein resides in the secreted. The catalysed reaction is The enzyme specifically hydrolyzes (1-&gt;4)-beta-D-galactosidic linkages in type I arabinogalactans.. Endogalactanase involved in the degradation of plant cell wall polysaccharides, and more particularly of hairy regions of pectin. This chain is Probable arabinogalactan endo-beta-1,4-galactanase A (galA), found in Aspergillus flavus (strain ATCC 200026 / FGSC A1120 / IAM 13836 / NRRL 3357 / JCM 12722 / SRRC 167).